The following is a 349-amino-acid chain: Heme A synthase (349 aa).

A run of 5 helical transmembrane segments spans residues 15–35, 101–121, 132–152, 162–182, and 203–223; these read AVQVWLYAVAALIVLMVVVGG, LLGRVIGLAFFLPFLYFALTG, FGLFLLGGLQGAVGWWMVASG, YRLAVHLTLACIILTAIVAVA, and VLVGLVLLQIFAGGLVAGLDA. Residue His-265 participates in heme binding. 3 helical membrane passes run 268–288, 296–316, and 317–337; these read IAYLIFALAFLHLLDCLRLGG, LVFALVAAQAMLGILTLVHMV, and PLDLALAHQLGATLVLIAAMI. His-324 is a binding site for heme.

Belongs to the COX15/CtaA family. Type 2 subfamily. Interacts with CtaB. It depends on heme b as a cofactor.

It is found in the cell membrane. It catalyses the reaction Fe(II)-heme o + 2 A + H2O = Fe(II)-heme a + 2 AH2. It functions in the pathway porphyrin-containing compound metabolism; heme A biosynthesis; heme A from heme O: step 1/1. Functionally, catalyzes the conversion of heme O to heme A by two successive hydroxylations of the methyl group at C8. The first hydroxylation forms heme I, the second hydroxylation results in an unstable dihydroxymethyl group, which spontaneously dehydrates, resulting in the formyl group of heme A. The chain is Heme A synthase from Azorhizobium caulinodans (strain ATCC 43989 / DSM 5975 / JCM 20966 / LMG 6465 / NBRC 14845 / NCIMB 13405 / ORS 571).